Reading from the N-terminus, the 860-residue chain is Leucine--tRNA ligase (860 aa).

The 'HIGH' region signature appears at 42-52 (PYPSGRLHMGH). The short motif at 619 to 623 (KMSKS) is the 'KMSKS' region element. Residue K622 coordinates ATP.

Belongs to the class-I aminoacyl-tRNA synthetase family.

The protein localises to the cytoplasm. It carries out the reaction tRNA(Leu) + L-leucine + ATP = L-leucyl-tRNA(Leu) + AMP + diphosphate. This Escherichia coli (strain SE11) protein is Leucine--tRNA ligase.